Consider the following 165-residue polypeptide: 2S seed storage protein 5 (165 aa).

Positions 1–20 (MAKLILVFATLALFILLANA) are cleaved as a signal peptide. 2 propeptides span residues 21–37 (SIYRTVVEFEEDDDVSN) and 71–89 (YEADDFELTLDVDLEDDEN).

It belongs to the 2S seed storage albumins family. In terms of assembly, the mature protein consists of a small and a large chain linked by disulfide bonds.

Its function is as follows. This is a 2S seed storage protein. The protein is 2S seed storage protein 5 (SESA5) of Arabidopsis thaliana (Mouse-ear cress).